The sequence spans 217 residues: tRNA (guanine-N(7)-)-methyltransferase (217 aa).

Positions 56, 81, 108, and 130 each coordinate S-adenosyl-L-methionine. Residue aspartate 130 is part of the active site. Positions 134 and 166 each coordinate substrate.

It belongs to the class I-like SAM-binding methyltransferase superfamily. TrmB family.

The enzyme catalyses guanosine(46) in tRNA + S-adenosyl-L-methionine = N(7)-methylguanosine(46) in tRNA + S-adenosyl-L-homocysteine. The protein operates within tRNA modification; N(7)-methylguanine-tRNA biosynthesis. In terms of biological role, catalyzes the formation of N(7)-methylguanine at position 46 (m7G46) in tRNA. This Neorickettsia sennetsu (strain ATCC VR-367 / Miyayama) (Ehrlichia sennetsu) protein is tRNA (guanine-N(7)-)-methyltransferase.